Reading from the N-terminus, the 109-residue chain is Mitochondrial import inner membrane translocase subunit TIM12 (109 aa).

Ser2 carries the post-translational modification N-acetylserine. A Twin CX3C motif motif is present at residues 40–66 (CLEKCIPHEGFGEPDLTKGEQCCIDRC). 2 disulfides stabilise this stretch: Cys40-Cys66 and Cys44-Cys62.

The protein belongs to the small Tim family. In terms of assembly, component of the TIM22 complex, whose core is composed of TIM18, TIM22 and TIM54, associated with the peripheral proteins MRS5/TIM12 and the 70 kDa heterohexamer composed of TIM9 and TIM10 (or TIM8 and TIM13). Interacts directly with both the TIM22 protein and the TIM9-TIM10 heterohexamer. Interacts with multi-pass transmembrane proteins in transit.

It is found in the mitochondrion inner membrane. The protein resides in the mitochondrion intermembrane space. In terms of biological role, essential component of the TIM22 complex, a complex that mediates the import and insertion of multi-pass transmembrane proteins into the mitochondrial inner membrane. The TIM22 complex forms a twin-pore translocase that uses the membrane potential as external driving force. In the TIM22 complex, it acts as a docking point for the soluble TIM9-TIM10 heterohexamer that guides the target proteins in transit through the aqueous mitochondrial intermembrane space. The sequence is that of Mitochondrial import inner membrane translocase subunit TIM12 (TIM12) from Saccharomyces cerevisiae (strain ATCC 204508 / S288c) (Baker's yeast).